The chain runs to 169 residues: Macrocypin-1a (169 aa).

The protein belongs to the protease inhibitor I85 family.

Its function is as follows. Inhibits papain and cysteine cathepsin endopeptidases, and also inhibits cathepsins B and H, which exhibit both exopeptidase and endopeptidase activities. The sequence is that of Macrocypin-1a from Macrolepiota procera (Parasol mushroom).